Here is a 328-residue protein sequence, read N- to C-terminus: Malate dehydrogenase (328 aa).

12 to 18 (GAAGQIG) lines the NAD(+) pocket. Substrate is bound by residues Arg-95 and Arg-101. Residues Asn-108, Gln-115, and 132–134 (VGN) contribute to the NAD(+) site. Residues Asn-134 and Arg-165 each coordinate substrate. His-190 (proton acceptor) is an active-site residue.

The protein belongs to the LDH/MDH superfamily. MDH type 2 family.

It catalyses the reaction (S)-malate + NAD(+) = oxaloacetate + NADH + H(+). Its function is as follows. Catalyzes the reversible oxidation of malate to oxaloacetate. The polypeptide is Malate dehydrogenase (Paracidovorax citrulli (strain AAC00-1) (Acidovorax citrulli)).